A 560-amino-acid chain; its full sequence is DNA ligase B (560 aa).

Residue Lys-124 is the N6-AMP-lysine intermediate of the active site.

It belongs to the NAD-dependent DNA ligase family. LigB subfamily.

The enzyme catalyses NAD(+) + (deoxyribonucleotide)n-3'-hydroxyl + 5'-phospho-(deoxyribonucleotide)m = (deoxyribonucleotide)n+m + AMP + beta-nicotinamide D-nucleotide.. Catalyzes the formation of phosphodiester linkages between 5'-phosphoryl and 3'-hydroxyl groups in double-stranded DNA using NAD as a coenzyme and as the energy source for the reaction. The protein is DNA ligase B of Escherichia coli (strain K12 / DH10B).